We begin with the raw amino-acid sequence, 275 residues long: Formamidopyrimidine-DNA glycosylase (275 aa).

Pro-2 (schiff-base intermediate with DNA) is an active-site residue. Glu-3 (proton donor) is an active-site residue. The active-site Proton donor; for beta-elimination activity is Lys-58. The DNA site is built by His-89, Arg-108, and Lys-151. An FPG-type; degenerate zinc finger spans residues 236 to 275 (KVYDRAGQPCERCPGPAACAGISRTVQSGRATYFCARTQK). The active-site Proton donor; for delta-elimination activity is Arg-265.

The protein belongs to the FPG family. Monomer. The cofactor is Zn(2+).

It catalyses the reaction Hydrolysis of DNA containing ring-opened 7-methylguanine residues, releasing 2,6-diamino-4-hydroxy-5-(N-methyl)formamidopyrimidine.. It carries out the reaction 2'-deoxyribonucleotide-(2'-deoxyribose 5'-phosphate)-2'-deoxyribonucleotide-DNA = a 3'-end 2'-deoxyribonucleotide-(2,3-dehydro-2,3-deoxyribose 5'-phosphate)-DNA + a 5'-end 5'-phospho-2'-deoxyribonucleoside-DNA + H(+). Its function is as follows. Involved in base excision repair of DNA damaged by oxidation or by mutagenic agents. Acts as a DNA glycosylase that recognizes and removes damaged bases. Has a preference for oxidized purines, such as 7,8-dihydro-8-oxoguanine (8-oxoG). Has AP (apurinic/apyrimidinic) lyase activity and introduces nicks in the DNA strand. Cleaves the DNA backbone by beta-delta elimination to generate a single-strand break at the site of the removed base with both 3'- and 5'-phosphates. This chain is Formamidopyrimidine-DNA glycosylase, found in Acidiphilium cryptum (strain JF-5).